The chain runs to 92 residues: Small ribosomal subunit protein uS19 (92 aa).

The protein belongs to the universal ribosomal protein uS19 family.

Protein S19 forms a complex with S13 that binds strongly to the 16S ribosomal RNA. This chain is Small ribosomal subunit protein uS19, found in Jannaschia sp. (strain CCS1).